The sequence spans 435 residues: Nuclear receptor subfamily 6 group A member 1 (435 aa).

Residues glutamine 11–glutamate 86 constitute a DNA-binding region (nuclear receptor). NR C4-type zinc fingers lie at residues cysteine 14–cysteine 34 and cysteine 50–cysteine 69. The interval isoleucine 84–methionine 157 is disordered. Polar residues predominate over residues asparagine 121 to glutamate 141. The span at serine 142–serine 156 shows a compositional bias: low complexity. An NR LBD domain is found at glutamine 204 to glutamate 435.

It belongs to the nuclear hormone receptor family. NR6 subfamily. Homodimer.

It is found in the cytoplasm. Its subcellular location is the nucleus. In terms of biological role, probable orphan nuclear receptor. Binds to a response element containing repeats of the motif 5'-AGGTCA-3'. Required for anterior-posterior patterning during organogenesis. Acts with chordin to play a role in patterning the midbrain-hindbrain. Isoform Em is required for integrin-mediated cell matrix interaction during neurulation and for the morphogenetic movements leading to formation of the neural tube. Also mediates the effect of retinoic acid on primary neurogenesis. The chain is Nuclear receptor subfamily 6 group A member 1 from Xenopus tropicalis (Western clawed frog).